The sequence spans 528 residues: Major facilitator-type transporter psiT2 (528 aa).

The tract at residues 1–20 is disordered; sequence MSPERSASLEPDEHSSLLSD. 5 helical membrane passes run 87–107, 125–145, 148–168, 174–194, and 220–240; these read FYSGLIESVFACGEVCSIFML, LGVALFTALFGLSTSFTMMLV, VCAGLLAGATPIVHSVVSELT, ALVVPLYGLITPIGFAIGPLI, and FLPSFVPCCLAVVGVTFGYFF. The span at 260-270 shows a compositional bias: low complexity; sequence STSSISSRTST. The disordered stretch occupies residues 260-299; that stretch reads STSSISSRTSTLYGATDDHNRDASESTALSPEEAEDEIDS. The next 6 helical transmembrane spans lie at 322-342, 357-377, 388-408, 424-444, 460-479, and 493-513; these read FLMFLYTSSDVLFSLYCFTAV, AFSVAGVIAMLMQLCITPWVL, FCMFSFPLVFALMGCLNPLAQ, GLLYAAIAVLLLLARVCVMAF, LATANGLVQVSMTIARALCP, and NILGGHLWVLIMVTISLAGVW.

This sequence belongs to the major facilitator superfamily. TCR/Tet family.

It localises to the membrane. In terms of biological role, major facilitator-type transporter; part of the gene cluster that mediates the biosynthesis of psilocybin, a psychotropic tryptamine-derived natural product. The protein is Major facilitator-type transporter psiT2 of Psilocybe cyanescens.